The sequence spans 673 residues: Protein VirD3 (673 aa).

Disordered stretches follow at residues 36 to 73 (VAGE…GRLG), 171 to 216 (SPVN…GTSV), 229 to 409 (ERDT…LRSS), 478 to 497 (RLNG…LEDF), 520 to 552 (EKGK…VTPL), and 585 to 673 (DSSR…GCGR). Composition is skewed to polar residues over residues 171-183 (SPVN…SNWQ), 193-216 (VQPS…GTSV), 234-246 (SETT…TISS), and 268-277 (QSLSVTVTTP). Residues 278 to 287 (NSNAEASSHS) show a composition bias toward low complexity. A compositionally biased stretch (basic and acidic residues) spans 288 to 303 (AHTETLDDVSSDRSSE). Basic and acidic residues-rich tracts occupy residues 520–534 (EKGK…DTRF) and 638–673 (AAEH…GCGR).

The polypeptide is Protein VirD3 (virD3) (Agrobacterium fabrum (strain C58 / ATCC 33970) (Agrobacterium tumefaciens (strain C58))).